The sequence spans 644 residues: Chaperone protein DnaK (644 aa).

T199 is subject to Phosphothreonine; by autocatalysis. Residues 589–644 (QALAEASHKLAEKMYSQGQGPQAGPGEEPSGQSGGTEKPVEGEVVDAEFEEVKNKK) form a disordered region. Low complexity predominate over residues 604–619 (SQGQGPQAGPGEEPSG).

It belongs to the heat shock protein 70 family.

Functionally, acts as a chaperone. This chain is Chaperone protein DnaK, found in Nitrosospira multiformis (strain ATCC 25196 / NCIMB 11849 / C 71).